A 798-amino-acid chain; its full sequence is MPRVPATLYACLLGLCALVPRLAGLNICTSGSATSCEECLLIHPKCAWCSKEYFGNPRSITSRCDLKANLIRNGCEGEIESPASSTHVLRNLPLSSKGSSATGSDVIQMTPQEIAVSLRPGEQTTFQLQVRQVEDYPVDLYYLMDLSLSMKDDLENIRSLGTKLAEEMRKLTSNFRLGFGSFVDKDISPFSYTAPRYQTNPCIGYKLFPNCVPSFGFRHLLPLTDRVDSFNEEVRKQRVSRNRDAPEGGFDAVLQAAVCKEKIGWRKDALHLLVFTTDDVPHIALDGKLGGLVQPHDGQCHLNEANEYTASNQMDYPSLALLGEKLAENNINLIFAVTKNHYMLYKNFTALIPGTTVEILHGDSKNIIQLIINAYSSIRAKVELSVWDQPEDLNLFFTATCQDGISYPGQRKCEGLKIGDTASFEVSVEARSCPGRQAAQSFTLRPVGFRDSLQVEVAYNCTCGCSTGLEPNSARCSGNGTYTCGLCECDPGYLGTRCECQEGENQSGYQNLCREAEGKPLCSGRGECSCNQCSCFESEFGRIYGPFCECDSFSCARNKGVLCSGHGECHCGECKCHAGYIGDNCNCSTDVSTCKAKDGQICSDRGRCVCGQCQCTEPGAFGETCEKCPTCPDACSSKRDCVECLLLHQGKPDNQTCHHQCKDEVITWVDTIVKDDQEAVLCFYKTAKDCVMMFSYTELPNGRSNLTVLREPECGSAPNAMTILLAVVGSILLIGMALLAIWKLLVTIHDRREFAKFQSERSRARYEMASNPLYRKPISTHTVDFAFNKFNKSYNGSV.

The first 23 residues, 1–23 (MPRVPATLYACLLGLCALVPRLA), serve as a signal peptide directing secretion. Topologically, residues 24–719 (GLNICTSGSA…REPECGSAPN (696 aa)) are extracellular. Positions 27 to 76 (ICTSGSATSCEECLLIHPKCAWCSKEYFGNPRSITSRCDLKANLIRNGCE) constitute a PSI domain. Cystine bridges form between Cys28–Cys46, Cys36–Cys463, Cys39–Cys64, Cys49–Cys75, Cys202–Cys211, Cys259–Cys300, Cys401–Cys413, Cys433–Cys461, Cys465–Cys484, Cys476–Cys487, Cys489–Cys498, Cys500–Cys530, Cys513–Cys528, Cys522–Cys533, Cys535–Cys548, Cys550–Cys571, Cys555–Cys569, Cys563–Cys574, and Cys576–Cys585. One can recognise a VWFA domain in the interval 136–378 (YPVDLYYLMD…QLIINAYSSI (243 aa)). Mg(2+) contacts are provided by Ser147 and Ser149. Ser149, Asp152, Asp153, and Asp184 together coordinate Ca(2+). Ca(2+) is bound by residues Asn242, Asp244, Pro246, and Glu247. Position 247 (Glu247) interacts with Mg(2+). A glycan (N-linked (GlcNAc...) asparagine) is linked at Asn347. Residue Gly362 participates in Ca(2+) binding. Asn460 and Asn479 each carry an N-linked (GlcNAc...) asparagine glycan. 4 I-EGF domains span residues 465–499 (CSTG…TRCE), 500–549 (CQEG…PFCE), 550–586 (CDSF…DNCN), and 587–626 (CSTD…ETCE). Asn505 carries N-linked (GlcNAc...) asparagine glycosylation. Asn586 is a glycosylation site (N-linked (GlcNAc...) asparagine). 9 disulfides stabilise this stretch: Cys587–Cys610, Cys594–Cys608, Cys602–Cys613, Cys615–Cys625, Cys628–Cys631, Cys635–Cys682, Cys641–Cys661, Cys644–Cys657, and Cys690–Cys714. 2 N-linked (GlcNAc...) asparagine glycosylation sites follow: Asn654 and Asn705. A helical membrane pass occupies residues 720 to 742 (AMTILLAVVGSILLIGMALLAIW). Over 743–798 (KLLVTIHDRREFAKFQSERSRARYEMASNPLYRKPISTHTVDFAFNKFNKSYNGSV) the chain is Cytoplasmic. Ser770 bears the Phosphoserine mark.

Belongs to the integrin beta chain family. As to quaternary structure, heterodimer of an alpha and a beta subunit. Beta-5 (ITGB5) associates with alpha-V (ITGAV). Interacts with MYO10. Interacts with DAB2. Integrin ITGAV:ITGB5 interacts with FBLN5 (via N-terminus). ITGAV:ITGB5 interacts with CCN3. Interacts with tensin TNS3; TNS3 also interacts with PEAK1, thus acting as an adapter molecule to bridge the association of PEAK1 with ITGB5.

It localises to the cell membrane. Functionally, integrin alpha-V/beta-5 (ITGAV:ITGB5) is a receptor for fibronectin. It recognizes the sequence R-G-D in its ligand. This Mus musculus (Mouse) protein is Integrin beta-5 (Itgb5).